The following is a 606-amino-acid chain: Urocanate reductase (606 aa).

Residues 1-40 (MSNLSRRNFITGGAIAALGGTLAIAGCAPKGESSSTVAGA) constitute a signal peptide (tat-type signal). Thr-111 is subject to FMN phosphoryl threonine. FAD-binding residues include Ala-163, Glu-182, Thr-191, Gly-195, Gly-196, Ala-197, Ala-305, and Asp-373. Residue Arg-433 is the Proton donor of the active site. FAD-binding residues include Glu-572 and Ile-588.

The protein belongs to the FAD-dependent oxidoreductase 2 family. FRD/SDH subfamily. Requires FAD as cofactor. It depends on FMN as a cofactor. Predicted to be exported by the Tat system. The position of the signal peptide cleavage has not been experimentally proven.

The catalysed reaction is dihydrourocanate + A = urocanate + AH2. Functionally, catalyzes the two-electron reduction of urocanate to dihydrourocanate (also named imidazole propionate or deamino-histidine). Dihydrourocanate is present at higher concentrations in subjects with type 2 diabetes, and directly impairs glucose tolerance and insulin signaling at the level of insulin receptor substrate (IRS) through activation of p38 gamma (MAPK12)-p62-mTORC1. Therefore, the UrdA enzyme from the gut bacteria E.lenta strain DSM 2243 may contribute to the pathogenesis of type 2 diabetes by producing the microbial metabolite dihydrourocanate. This is Urocanate reductase from Eggerthella lenta (strain ATCC 25559 / DSM 2243 / CCUG 17323 / JCM 9979 / KCTC 3265 / NCTC 11813 / VPI 0255 / 1899 B) (Eubacterium lentum).